The sequence spans 530 residues: Probable glycerol-3-phosphate acyltransferase 2 (530 aa).

The next 3 membrane-spanning stretches (helical) occupy residues 70–90 (YFMV…LLVL), 93–113 (FISL…SFFG), and 275–295 (LVLF…LVFG). An HXXXXD motif motif is present at residues 339–344 (HRTLLD).

The protein belongs to the GPAT/DAPAT family. In terms of tissue distribution, weakly or not expressed in roots, leaves, seedlings, developing siliques and flower buds.

Its subcellular location is the membrane. The catalysed reaction is sn-glycerol 3-phosphate + an acyl-CoA = a 1-acyl-sn-glycero-3-phosphate + CoA. Its pathway is phospholipid metabolism; CDP-diacylglycerol biosynthesis; CDP-diacylglycerol from sn-glycerol 3-phosphate: step 1/3. Esterifies acyl-group from acyl-ACP to the sn-1 position of glycerol-3-phosphate, an essential step in glycerolipid biosynthesis. This is Probable glycerol-3-phosphate acyltransferase 2 (GPAT2) from Arabidopsis thaliana (Mouse-ear cress).